The following is a 290-amino-acid chain: MSIISTKYLLQDAQTKGYAVPAFNIHNAETIQAILEVCSEMQSPVILAGTPGTFKHIALEEIYALCSAYSNSYDIPLALHLDHHESLEDIRRKVNAGVRSAMIDGSHFPFEENVKLVKSVVDFCHARDCSVEAELGRLGGVEDDMSVDAESAFLTDPQEAKRFVELTGVDSLAVAIGTAHGLYTKCPKIDFQRLAEIREVVDIPLVLHGASDVPDEYVRRTIELGVCKVNVATELKIAFADAVKKWFAENPDGNDPRYYMRVGMDAMKDVVRSKITVCGSYKKLLQPSHC.

The Proton donor role is filled by Asp82. Residues His83 and His180 each coordinate Zn(2+). Gly181 is a binding site for dihydroxyacetone phosphate. A Zn(2+)-binding site is contributed by His208. Dihydroxyacetone phosphate is bound by residues 209-211 and 230-233; these read GAS and NVAT.

It belongs to the class II fructose-bisphosphate aldolase family. TagBP aldolase KbaY subfamily. In terms of assembly, homotetramer. Forms a complex with KbaZ. Requires Zn(2+) as cofactor.

It carries out the reaction D-tagatofuranose 1,6-bisphosphate = D-glyceraldehyde 3-phosphate + dihydroxyacetone phosphate. It participates in carbohydrate metabolism; D-tagatose 6-phosphate degradation; D-glyceraldehyde 3-phosphate and glycerone phosphate from D-tagatose 6-phosphate: step 2/2. Catalytic subunit of the tagatose-1,6-bisphosphate aldolase KbaYZ, which catalyzes the reversible aldol condensation of dihydroxyacetone phosphate (DHAP or glycerone-phosphate) with glyceraldehyde 3-phosphate (G3P) to produce tagatose 1,6-bisphosphate (TBP). Requires KbaZ subunit for full activity and stability. In Citrobacter koseri (strain ATCC BAA-895 / CDC 4225-83 / SGSC4696), this protein is D-tagatose-1,6-bisphosphate aldolase subunit KbaY.